We begin with the raw amino-acid sequence, 321 residues long: Lipoyl synthase (321 aa).

Cys-68, Cys-73, Cys-79, Cys-94, Cys-98, Cys-101, and Ser-308 together coordinate [4Fe-4S] cluster. One can recognise a Radical SAM core domain in the interval 80 to 297; the sequence is FNHGTATFMI…KALADELGFT (218 aa).

Belongs to the radical SAM superfamily. Lipoyl synthase family. [4Fe-4S] cluster serves as cofactor.

The protein localises to the cytoplasm. It catalyses the reaction [[Fe-S] cluster scaffold protein carrying a second [4Fe-4S](2+) cluster] + N(6)-octanoyl-L-lysyl-[protein] + 2 oxidized [2Fe-2S]-[ferredoxin] + 2 S-adenosyl-L-methionine + 4 H(+) = [[Fe-S] cluster scaffold protein] + N(6)-[(R)-dihydrolipoyl]-L-lysyl-[protein] + 4 Fe(3+) + 2 hydrogen sulfide + 2 5'-deoxyadenosine + 2 L-methionine + 2 reduced [2Fe-2S]-[ferredoxin]. The protein operates within protein modification; protein lipoylation via endogenous pathway; protein N(6)-(lipoyl)lysine from octanoyl-[acyl-carrier-protein]: step 2/2. Functionally, catalyzes the radical-mediated insertion of two sulfur atoms into the C-6 and C-8 positions of the octanoyl moiety bound to the lipoyl domains of lipoate-dependent enzymes, thereby converting the octanoylated domains into lipoylated derivatives. The chain is Lipoyl synthase from Shewanella putrefaciens (strain CN-32 / ATCC BAA-453).